The sequence spans 65 residues: uncharacterized protein (65 aa).

This is an uncharacterized protein from Dictyostelium discoideum (Social amoeba).